Here is a 216-residue protein sequence, read N- to C-terminus: Ribosomal RNA small subunit methyltransferase G (216 aa).

S-adenosyl-L-methionine is bound by residues glycine 73, leucine 78, 124 to 125, and arginine 139; that span reads AE.

It belongs to the methyltransferase superfamily. RNA methyltransferase RsmG family.

It is found in the cytoplasm. Specifically methylates the N7 position of guanine in position 518 of 16S rRNA. This Pseudarthrobacter chlorophenolicus (strain ATCC 700700 / DSM 12829 / CIP 107037 / JCM 12360 / KCTC 9906 / NCIMB 13794 / A6) (Arthrobacter chlorophenolicus) protein is Ribosomal RNA small subunit methyltransferase G.